A 252-amino-acid chain; its full sequence is Mediator of RNA polymerase II transcription subunit 20 (252 aa).

Belongs to the Mediator complex subunit 20 family. Component of the Mediator complex, which includes at least CDK8, MED4, MED6, MED11, MED14, MED17, MED18, MED20, MED21, MED22, MED27, MED28, MED30 and MED31.

It is found in the nucleus. In terms of biological role, component of the Mediator complex, a coactivator involved in the regulated transcription of nearly all RNA polymerase II-dependent genes. Mediator functions as a bridge to convey information from gene-specific regulatory proteins to the basal RNA polymerase II transcription machinery. Mediator is recruited to promoters by direct interactions with regulatory proteins and serves as a scaffold for the assembly of a functional preinitiation complex with RNA polymerase II and the general transcription factors. Required for activated transcription of the MtnA gene. The chain is Mediator of RNA polymerase II transcription subunit 20 (MED20) from Drosophila melanogaster (Fruit fly).